The primary structure comprises 707 residues: MDKLDLVNDGLDIIDFIQKNQKEIQKTYGRSSIQQPSTKDRTRAWEDFLQSTSGEHEQAEGGMPKNDGGTEGRNVEDLSSVTSSDGTIGQRVSNTRAWAEDPDDIQLDPMVTDVVYHDHGGECTGHGPSSSPERGWSYHMSGTHDGNVRAVPDTKVLPNAPKTTVPEEVREIDLIGLEDKFASAGLNPAAVPFVPKNQSTPTEEPPVIPEYYYGSGRRGDLSKSPPRGNVNLDSIKIYTSDDEDENQLEYEDEFAKSSSEVVIDTTPEDNDSINQEEVVGDPSDQGLEHPFPLGKFPEKEETPDVRRKDSLMQDSCKRGGVPKRLPMLSEEFECSGSDDPIIQELEREGSHPGGSLRLREPPQSSGNSRNQPDRQLKTGDAASPGGVQRPGTPMPKSRIMPIKKGTDAKSQYVGTEDVPGSKSGATRYVRGLPPNQESKSVTAENVQLSAPSAVTRNEGHDQEVTSNEDSLDDKYIMPSDDFANTFLPHDTDRLNYHADHLNDYDLETLCEESVLMGIVNAIKLINIDMRLNHIEEQMKEIPKIINKIDSIDRVLAKTNTALSTIEGHLVSMMIMIPGKGKGERKGKTNPELKPVIGRNILEQQELFSFDNLKNFRDGSLTDEPYGGVARIRDDLILPELNFSETNASQFVPLADDASKDVVRTMIRTHIKDRELRSELMDYLNRAETDEEVQEVANTVNDIIDGNI.

The interval Met1 to Gln35 is N0 binding. Disordered regions lie at residues Lys26–Asp103, Phe193–Asn229, Phe254–Val446, and Val454–Asp473. Composition is skewed to polar residues over residues Tyr28–Ser37 and Asp77–Arg96. Ser257 is subject to Phosphoserine; by host. A compositionally biased stretch (basic and acidic residues) spans Phe296 to Lys317. Phosphoserine; by host is present on Ser350. The span at Asn435–Val446 shows a compositional bias: polar residues. A multimerization region spans residues Asp473 to Gly578.

Homotetramer. Interacts (via multimerization domain) with polymerase L; this interaction forms the polymerase L-P complex. Interacts (via N-terminus) with N0 (via Ncore); this interaction allows P to chaperon N0 to avoid N polymerization before encapsidation. Interacts (via C-terminus) with N-RNA template; this interaction positions the polymerase on the template for both transcription and replication.

Essential cofactor of the RNA polymerase L that plays a central role in the transcription and replication by forming the polymerase complex with RNA polymerase L and recruiting L to the genomic N-RNA template for RNA synthesis. Also plays a central role in the encapsidation of nascent RNA chains by forming the encapsidation complex with the nucleocapsid protein N (N-P complex). Acts as a chaperone for newly synthesized free N protein, so-called N0, allowing encapsidation of nascent RNA chains during replication. The nucleoprotein protein N prevents excessive phosphorylation of P, which leads to down-regulation of viral transcription/ replication. Participates, together with N, in the formation of viral factories (viroplasms), which are large inclusions in the host cytoplasm where replication takes place. The chain is Phosphoprotein (P/V/C) from Equus caballus (Horse).